We begin with the raw amino-acid sequence, 283 residues long: NADPH-dependent 7-cyano-7-deazaguanine reductase (283 aa).

90–92 (IES) is a substrate binding site. 92 to 93 (SK) contacts NADPH. C191 (thioimide intermediate) is an active-site residue. The active-site Proton donor is D198. 230-231 (HE) is a binding site for substrate. Position 259-260 (259-260 (RG)) interacts with NADPH.

It belongs to the GTP cyclohydrolase I family. QueF type 2 subfamily. Homodimer.

It is found in the cytoplasm. The enzyme catalyses 7-aminomethyl-7-carbaguanine + 2 NADP(+) = 7-cyano-7-deazaguanine + 2 NADPH + 3 H(+). Its pathway is tRNA modification; tRNA-queuosine biosynthesis. Functionally, catalyzes the NADPH-dependent reduction of 7-cyano-7-deazaguanine (preQ0) to 7-aminomethyl-7-deazaguanine (preQ1). This chain is NADPH-dependent 7-cyano-7-deazaguanine reductase, found in Tolumonas auensis (strain DSM 9187 / NBRC 110442 / TA 4).